The sequence spans 764 residues: 5-methyltetrahydropteroyltriglutamate--homocysteine methyltransferase (764 aa).

5-methyltetrahydropteroyltri-L-glutamate contacts are provided by residues 16–19 (RELK) and lysine 117. Residues 442–444 (IGS) and glutamate 495 each bind L-homocysteine. L-methionine is bound by residues 442 to 444 (IGS) and glutamate 495. 5-methyltetrahydropteroyltri-L-glutamate-binding positions include 526–527 (RC) and tryptophan 572. Aspartate 610 serves as a coordination point for L-homocysteine. Aspartate 610 is an L-methionine binding site. Glutamate 616 is a binding site for 5-methyltetrahydropteroyltri-L-glutamate. Residues histidine 652, cysteine 654, and glutamate 676 each contribute to the Zn(2+) site. Histidine 705 acts as the Proton donor in catalysis. Cysteine 737 serves as a coordination point for Zn(2+).

This sequence belongs to the vitamin-B12 independent methionine synthase family. The cofactor is Zn(2+).

The enzyme catalyses 5-methyltetrahydropteroyltri-L-glutamate + L-homocysteine = tetrahydropteroyltri-L-glutamate + L-methionine. It participates in amino-acid biosynthesis; L-methionine biosynthesis via de novo pathway; L-methionine from L-homocysteine (MetE route): step 1/1. Its function is as follows. Catalyzes the transfer of a methyl group from 5-methyltetrahydrofolate to homocysteine resulting in methionine formation. This Bordetella bronchiseptica (strain ATCC BAA-588 / NCTC 13252 / RB50) (Alcaligenes bronchisepticus) protein is 5-methyltetrahydropteroyltriglutamate--homocysteine methyltransferase.